Consider the following 138-residue polypeptide: FUN14 domain-containing protein fndc-1 (138 aa).

2 helical membrane-spanning segments follow: residues 37-56 (PMVQ…YFVT) and 61-78 (LVAA…FAIH). N-linked (GlcNAc...) asparagine glycans are attached at residues Asn-85 and Asn-111.

The protein belongs to the FUN14 family. As to expression, broadly expressed in somatic tissues. Expressed in the hermaphrodite spermatheca and male gonad. Expressed in spermatids, but not expressed in oocytes.

The protein resides in the mitochondrion outer membrane. Functionally, mitophagy receptor which plays a role in paternal mitochondria degradation in embryos after the two-cell stage. The chain is FUN14 domain-containing protein fndc-1 from Caenorhabditis elegans.